The primary structure comprises 322 residues: 8-oxo-(d)GTP phosphatase (322 aa).

A disordered region spans residues 1-21 (MMPVDDLQEIPLSKDTTEKSK). One can recognise a Nudix hydrolase domain in the interval 22–156 (HTVRAAGAVL…DDRKVLRRFV (135 aa)). Substrate contacts are provided by residues 55–58 (RPRY), aspartate 60, and 65–67 (KGK). 3 residues coordinate Mg(2+): lysine 65, glutamate 81, and glutamate 85. The Nudix box signature appears at 66 to 87 (GKLDQGETEPVAAAREIHEETG). Substrate-binding residues include tyrosine 101, lysine 108, glutamate 127, and tyrosine 145. Position 127 (glutamate 127) interacts with Mg(2+).

Belongs to the Nudix hydrolase family. In terms of assembly, forms head-to-tail homodimers. Mg(2+) serves as cofactor.

It carries out the reaction 8-oxo-dGTP + H2O = 8-oxo-dGDP + phosphate + H(+). The enzyme catalyses 8-oxo-GTP + H2O = 8-oxo-GDP + phosphate + H(+). It catalyses the reaction 8-oxo-dGDP + H2O = 8-oxo-dGMP + phosphate + H(+). The catalysed reaction is 8-oxo-GDP + H2O = 8-oxo-GMP + phosphate + H(+). It carries out the reaction P(1),P(6)-bis(5'-adenosyl) hexaphosphate + H2O = 2 ATP + 2 H(+). The enzyme catalyses P(1),P(5)-bis(5'-adenosyl) pentaphosphate + H2O = ADP + ATP + 2 H(+). It catalyses the reaction P(1),P(4)-bis(5'-adenosyl) tetraphosphate + H2O = AMP + ATP + 2 H(+). With respect to regulation, ap4A hydrolysis is inhibited by fluoride ions. In terms of biological role, catalyzes the conversion of 8-oxo-dGTP to 8-oxo-dGDP, and 8-oxo-GTP to 8-oxo-GDP. At high enzyme concentrations, can also catalyze the conversion of 8-oxo-dGDP to 8-oxo-dGMP, and 8-oxo-GDP to 8-oxo-GMP. In addition, catalyzes the hydrolysis of the diadenosine polyphosphates diadenosine hexaphosphate (Ap6A), diadenosine pentaphosphate (Ap5A) and diadenosine tetraphosphate (Ap4A). The protein is 8-oxo-(d)GTP phosphatase of Mycolicibacterium smegmatis (strain ATCC 700084 / mc(2)155) (Mycobacterium smegmatis).